We begin with the raw amino-acid sequence, 572 residues long: Proline--tRNA ligase (572 aa).

The protein belongs to the class-II aminoacyl-tRNA synthetase family. ProS type 1 subfamily. As to quaternary structure, homodimer.

It localises to the cytoplasm. It carries out the reaction tRNA(Pro) + L-proline + ATP = L-prolyl-tRNA(Pro) + AMP + diphosphate. In terms of biological role, catalyzes the attachment of proline to tRNA(Pro) in a two-step reaction: proline is first activated by ATP to form Pro-AMP and then transferred to the acceptor end of tRNA(Pro). As ProRS can inadvertently accommodate and process non-cognate amino acids such as alanine and cysteine, to avoid such errors it has two additional distinct editing activities against alanine. One activity is designated as 'pretransfer' editing and involves the tRNA(Pro)-independent hydrolysis of activated Ala-AMP. The other activity is designated 'posttransfer' editing and involves deacylation of mischarged Ala-tRNA(Pro). The misacylated Cys-tRNA(Pro) is not edited by ProRS. The polypeptide is Proline--tRNA ligase (Shewanella amazonensis (strain ATCC BAA-1098 / SB2B)).